Reading from the N-terminus, the 207-residue chain is Zinc finger protein JAGGED-like (207 aa).

Positions 1–16 (MRADENNTLDLNNLPD) are enriched in low complexity. A disordered region spans residues 1-20 (MRADENNTLDLNNLPDDPSR). The C2H2-type zinc finger occupies 50–72 (YECRFCSLKFFKSQALGGHMNRH).

In terms of tissue distribution, expressed in the emerging leaf, stamen and carpel primordia. Not expressed in the apical shoot meristem (SAM).

Its subcellular location is the nucleus. Its function is as follows. Acts with JAG to promote growth and patterning in stamens and carpels. Promotes the growth of the abaxial and adaxial sides of floral organs. Promotes the growth of the pollen-bearing microsporangia in anthers, the carpel walls of the gynoecium and the establishment of the correct number of cell layers in carpel walls. Promotes leaf blade growth and trichome development. The protein is Zinc finger protein JAGGED-like (JGL) of Arabidopsis thaliana (Mouse-ear cress).